We begin with the raw amino-acid sequence, 240 residues long: Cell division control protein 14 (240 aa).

Interacts with sid1.

The protein resides in the cytoplasm. Its subcellular location is the cytoskeleton. The protein localises to the microtubule organizing center. It localises to the spindle pole body. Its function is as follows. Has a role in the septation initiation network (SIN) required for cytokinesis. This is Cell division control protein 14 (cdc14) from Schizosaccharomyces pombe (strain 972 / ATCC 24843) (Fission yeast).